The sequence spans 304 residues: Large ribosomal subunit protein uL18 (304 aa).

The protein belongs to the universal ribosomal protein uL18 family. As to quaternary structure, component of a hexameric 5S RNP precursor complex, composed of 5S RNA, RRS1, RPF2, RPL5, RPL11 and SYO1; this complex acts as a precursor for ribosome assembly.

Its subcellular location is the cytoplasm. Component of the ribosome, a large ribonucleoprotein complex responsible for the synthesis of proteins in the cell. The small ribosomal subunit (SSU) binds messenger RNAs (mRNAs) and translates the encoded message by selecting cognate aminoacyl-transfer RNA (tRNA) molecules. The large subunit (LSU) contains the ribosomal catalytic site termed the peptidyl transferase center (PTC), which catalyzes the formation of peptide bonds, thereby polymerizing the amino acids delivered by tRNAs into a polypeptide chain. The nascent polypeptides leave the ribosome through a tunnel in the LSU and interact with protein factors that function in enzymatic processing, targeting, and the membrane insertion of nascent chains at the exit of the ribosomal tunnel. The sequence is that of Large ribosomal subunit protein uL18 from Chaetomium thermophilum (strain DSM 1495 / CBS 144.50 / IMI 039719) (Thermochaetoides thermophila).